A 402-amino-acid chain; its full sequence is Non-homologous end joining protein Ku (402 aa).

The 174-residue stretch at 12–185 (ISFGLVTIPV…VAALTGIAQP (174 aa)) folds into the Ku domain. The segment at 261–402 (QRAAGGATGG…GPDETAPGGP (142 aa)) is disordered. 2 stretches are compositionally biased toward low complexity: residues 299-308 (GDPAASVPGV) and 332-343 (VPGVPATAVPGT). A compositionally biased stretch (pro residues) spans 344-358 (PGAPVPTAPGVPSAP). Over residues 359–376 (APGTSPTSVPGVQTAPNG) the composition is skewed to low complexity.

It belongs to the prokaryotic Ku family. As to quaternary structure, homodimer. Interacts with LigD.

With LigD forms a non-homologous end joining (NHEJ) DNA repair enzyme, which repairs dsDNA breaks with reduced fidelity. Binds linear dsDNA with 5'- and 3'- overhangs but not closed circular dsDNA nor ssDNA. Recruits and stimulates the ligase activity of LigD. The polypeptide is Non-homologous end joining protein Ku (Symbiobacterium thermophilum (strain DSM 24528 / JCM 14929 / IAM 14863 / T)).